Reading from the N-terminus, the 62-residue chain is Potassium channel toxin alpha-KTx Tx773 (62 aa).

A signal peptide spans methionine 1–alanine 18. 3 cysteine pairs are disulfide-bonded: cysteine 28-cysteine 46, cysteine 33-cysteine 59, and cysteine 37-cysteine 61.

Belongs to the short scorpion toxin superfamily. Potassium channel inhibitor family. Alpha-KTx 23 subfamily. In terms of tissue distribution, expressed by the venom gland.

The protein localises to the secreted. Functionally, may block potassium channels. The polypeptide is Potassium channel toxin alpha-KTx Tx773 (Buthus israelis (Israeli scorpion)).